A 214-amino-acid chain; its full sequence is Probable nicotinate-nucleotide adenylyltransferase (214 aa).

Belongs to the NadD family.

It catalyses the reaction nicotinate beta-D-ribonucleotide + ATP + H(+) = deamido-NAD(+) + diphosphate. The protein operates within cofactor biosynthesis; NAD(+) biosynthesis; deamido-NAD(+) from nicotinate D-ribonucleotide: step 1/1. Its function is as follows. Catalyzes the reversible adenylation of nicotinate mononucleotide (NaMN) to nicotinic acid adenine dinucleotide (NaAD). The polypeptide is Probable nicotinate-nucleotide adenylyltransferase (Rubrobacter xylanophilus (strain DSM 9941 / JCM 11954 / NBRC 16129 / PRD-1)).